Here is a 378-residue protein sequence, read N- to C-terminus: Spermidine/putrescine import ATP-binding protein PotA (378 aa).

One can recognise an ABC transporter domain in the interval 18-248 (VQLAGIRKCF…PKNLFVAGFI (231 aa)). 50-57 (GPSGCGKT) is an ATP binding site.

This sequence belongs to the ABC transporter superfamily. Spermidine/putrescine importer (TC 3.A.1.11.1) family. The complex is composed of two ATP-binding proteins (PotA), two transmembrane proteins (PotB and PotC) and a solute-binding protein (PotD).

The protein resides in the cell inner membrane. The enzyme catalyses ATP + H2O + polyamine-[polyamine-binding protein]Side 1 = ADP + phosphate + polyamineSide 2 + [polyamine-binding protein]Side 1.. Its function is as follows. Part of the ABC transporter complex PotABCD involved in spermidine/putrescine import. Responsible for energy coupling to the transport system. This chain is Spermidine/putrescine import ATP-binding protein PotA, found in Shigella dysenteriae serotype 1 (strain Sd197).